The sequence spans 484 residues: Aspartyl/glutamyl-tRNA(Asn/Gln) amidotransferase subunit B (484 aa).

This sequence belongs to the GatB/GatE family. GatB subfamily. In terms of assembly, heterotrimer of A, B and C subunits.

The enzyme catalyses L-glutamyl-tRNA(Gln) + L-glutamine + ATP + H2O = L-glutaminyl-tRNA(Gln) + L-glutamate + ADP + phosphate + H(+). It catalyses the reaction L-aspartyl-tRNA(Asn) + L-glutamine + ATP + H2O = L-asparaginyl-tRNA(Asn) + L-glutamate + ADP + phosphate + 2 H(+). Its function is as follows. Allows the formation of correctly charged Asn-tRNA(Asn) or Gln-tRNA(Gln) through the transamidation of misacylated Asp-tRNA(Asn) or Glu-tRNA(Gln) in organisms which lack either or both of asparaginyl-tRNA or glutaminyl-tRNA synthetases. The reaction takes place in the presence of glutamine and ATP through an activated phospho-Asp-tRNA(Asn) or phospho-Glu-tRNA(Gln). The chain is Aspartyl/glutamyl-tRNA(Asn/Gln) amidotransferase subunit B from Cupriavidus metallidurans (strain ATCC 43123 / DSM 2839 / NBRC 102507 / CH34) (Ralstonia metallidurans).